We begin with the raw amino-acid sequence, 530 residues long: Per os infectivity factor 1 (530 aa).

Residues 1–15 form the signal peptide; it reads MHFAIILLFLLVIIA.

As to quaternary structure, forms the PIF complex together with PIF2 and PIF3. The complex also interacts with per os infectivity factor PIF0.

The protein localises to the virion membrane. Functionally, per os infectivity factor that mediates the specific binding of occluded virions (ODV) to the host midgut target cells. The sequence is that of Per os infectivity factor 1 from Autographa californica nuclear polyhedrosis virus (AcMNPV).